The following is a 264-amino-acid chain: Ribonuclease HII (264 aa).

Residues 69 to 263 (KVVCGIDEVG…EENAKTITKP (195 aa)) enclose the RNase H type-2 domain. Asp-75, Glu-76, and Asp-166 together coordinate a divalent metal cation.

This sequence belongs to the RNase HII family. It depends on Mn(2+) as a cofactor. Requires Mg(2+) as cofactor.

It is found in the cytoplasm. It catalyses the reaction Endonucleolytic cleavage to 5'-phosphomonoester.. Endonuclease that specifically degrades the RNA of RNA-DNA hybrids. This is Ribonuclease HII from Macrococcus caseolyticus (strain JCSC5402) (Macrococcoides caseolyticum).